The sequence spans 361 residues: DNA replication and repair protein RecF (361 aa).

Position 30–37 (30–37) interacts with ATP; the sequence is GDNAQGKT.

This sequence belongs to the RecF family.

The protein resides in the cytoplasm. In terms of biological role, the RecF protein is involved in DNA metabolism; it is required for DNA replication and normal SOS inducibility. RecF binds preferentially to single-stranded, linear DNA. It also seems to bind ATP. The polypeptide is DNA replication and repair protein RecF (Clostridium perfringens (strain ATCC 13124 / DSM 756 / JCM 1290 / NCIMB 6125 / NCTC 8237 / Type A)).